Reading from the N-terminus, the 351-residue chain is Columbamine O-methyltransferase (351 aa).

Residues Gly198, Asp221, Asp241, Met242, and Lys255 each coordinate S-adenosyl-L-methionine. The Proton acceptor role is filled by His259.

It belongs to the class I-like SAM-binding methyltransferase superfamily. Cation-independent O-methyltransferase family. COMT subfamily. As to quaternary structure, homodimer.

It catalyses the reaction columbamine + S-adenosyl-L-methionine = palmatine + S-adenosyl-L-homocysteine + H(+). The enzyme catalyses (S)-tetrahydrocolumbamine + S-adenosyl-L-methionine = (S)-tetrahydropalmatine + S-adenosyl-L-homocysteine + H(+). Its pathway is alkaloid biosynthesis; palmatine biosynthesis; palmatine from columbamine: step 1/1. Its function is as follows. Catalyzes the conversion of tetrahydrocolumbamine to (S)-tetrahydropalmatine and of columbamine to palmatine, an isoquinoline alkaloid. This Coptis japonica (Japanese goldthread) protein is Columbamine O-methyltransferase.